Here is an 83-residue protein sequence, read N- to C-terminus: Small ribosomal subunit protein eS21 (83 aa).

It belongs to the eukaryotic ribosomal protein eS21 family. In terms of assembly, component of the 40S small ribosomal subunit.

Its subcellular location is the cytoplasm. It is found in the cytosol. The protein resides in the rough endoplasmic reticulum. The protein is Small ribosomal subunit protein eS21 (RpS21) of Agriotes lineatus (Lined click beetle).